The chain runs to 494 residues: UPF0371 protein SP70585_0405 (494 aa).

Belongs to the UPF0371 family.

The polypeptide is UPF0371 protein SP70585_0405 (Streptococcus pneumoniae (strain 70585)).